The sequence spans 977 residues: Synaptopodin 2-like protein (977 aa).

A PDZ domain is found at 6-88 (EVLVTLSGGA…QLVLTVQRLA (83 aa)). Disordered stretches follow at residues 91–226 (GPVQ…GPLR), 317–352 (AGTG…QSDW), and 364–677 (AGSR…EDAL). 2 positions are modified to phosphoserine: S108 and S111. A compositionally biased stretch (pro residues) spans 109–123 (PLSPEPPGAPVPQPL). A Phosphothreonine modification is found at T141. S143, S178, and S180 each carry phosphoserine. Over residues 183 to 192 (EPAPTIPGPP) the composition is skewed to pro residues. The segment covering 194–203 (QGDSRVSSPS) has biased composition (polar residues). Residues 216-226 (EALLLPHGPLR) show a composition bias toward low complexity. A phosphoserine mark is found at S345, S350, S374, S381, and S384. R386 carries the post-translational modification Omega-N-methylarginine. Residues 436–450 (PPSPLPAPVASPRPF) show a composition bias toward pro residues. Omega-N-methylarginine is present on residues R466, R469, and R479. Over residues 510 to 525 (LSSQGPTPLPSFTSGV) the composition is skewed to polar residues. Composition is skewed to low complexity over residues 530–545 (PVSG…GPVT) and 572–595 (SAAA…ARPE). A compositionally biased stretch (pro residues) spans 596-607 (APAPGPGAPEPP). Phosphoserine is present on residues S670 and S678. Residues 697 to 802 (TLPHVTPKTP…PSLPPSWKYS (106 aa)) form a disordered region. The span at 704–730 (KTPPPMAPKTPPPMTPKTPPPVAPKPP) shows a compositional bias: pro residues. A phosphothreonine mark is found at T705 and T713. R757 carries the post-translational modification Omega-N-methylarginine. Over residues 781–796 (GLGPRPRSPSPTPSLP) the composition is skewed to pro residues. S788 and S790 each carry phosphoserine. T792 is subject to Phosphothreonine. Omega-N-methylarginine occurs at positions 806, 826, and 889. S891 carries the phosphoserine modification. Residues T892 and T898 each carry the phosphothreonine modification. Omega-N-methylarginine is present on R910. Asymmetric dimethylarginine; alternate is present on R921. Position 921 is an omega-N-methylarginine; alternate (R921). The interval 922–950 (TELASAPVPSPAPPPEAPRGLGASPSSCG) is disordered. Residues 929–938 (VPSPAPPPEA) show a composition bias toward pro residues. Omega-N-methylarginine is present on residues R955 and R957.

Belongs to the synaptopodin family.

It is found in the cytoplasm. The protein localises to the cytoskeleton. In terms of biological role, actin-associated protein that may play a role in modulating actin-based shape. The chain is Synaptopodin 2-like protein (SYNPO2L) from Homo sapiens (Human).